The chain runs to 311 residues: Serpentine receptor class gamma-6 (311 aa).

The next 7 membrane-spanning stretches (helical) occupy residues 24-44 (MGQL…IYVI), 58-78 (FWLL…FDIF), 101-121 (PLLI…KMVA), 148-168 (LTAC…NILI), 200-220 (YMQI…AILW), 235-255 (IWFA…YLHM), and 266-286 (IFML…VIMI).

Belongs to the nematode receptor-like protein srg family.

It is found in the membrane. The sequence is that of Serpentine receptor class gamma-6 (srg-6) from Caenorhabditis elegans.